A 283-amino-acid chain; its full sequence is Acetylglutamate kinase (283 aa).

Substrate is bound by residues 63 to 64 (GG), R85, and N178.

This sequence belongs to the acetylglutamate kinase family. ArgB subfamily.

It is found in the cytoplasm. The catalysed reaction is N-acetyl-L-glutamate + ATP = N-acetyl-L-glutamyl 5-phosphate + ADP. Its pathway is amino-acid biosynthesis; L-arginine biosynthesis; N(2)-acetyl-L-ornithine from L-glutamate: step 2/4. Catalyzes the ATP-dependent phosphorylation of N-acetyl-L-glutamate. The protein is Acetylglutamate kinase of Prochlorococcus marinus (strain MIT 9312).